A 199-amino-acid chain; its full sequence is N-(5'-phosphoribosyl)anthranilate isomerase (199 aa).

The protein belongs to the TrpF family.

The catalysed reaction is N-(5-phospho-beta-D-ribosyl)anthranilate = 1-(2-carboxyphenylamino)-1-deoxy-D-ribulose 5-phosphate. Its pathway is amino-acid biosynthesis; L-tryptophan biosynthesis; L-tryptophan from chorismate: step 3/5. The polypeptide is N-(5'-phosphoribosyl)anthranilate isomerase (Solibacter usitatus (strain Ellin6076)).